Reading from the N-terminus, the 299-residue chain is Telomere repeat-binding factor 2 (299 aa).

The 61-residue stretch at 1–61 (MGAPKQKWTP…KWRNISVTAL (61 aa)) folds into the HTH myb-type domain. A DNA-binding region (H-T-H motif) is located at residues 28 to 57 (WRTILSDTEFSLILKSRSNVDLKDKWRNIS). The tract at residues 93 to 116 (LTNDDERAKPTSPGGSGGGSPRTC) is disordered. The H15 domain occupies 121 to 189 (SITSLDKIIF…KIKHKYRFSS (69 aa)). A coiled-coil region spans residues 243–288 (EAAEAAARAVAEAEFAITEAEQAAKEAERAEAEAEAAQIFAKAAMK).

It belongs to the histone H1/H5 family. SMH subfamily. As to quaternary structure, forms a homodimer and heterodimers with TRB1 or TRB3. Interacts with TRB1 and TRB3. As to expression, ubiquitous.

It localises to the nucleus. Its subcellular location is the nucleolus. It is found in the chromosome. Binds preferentially double-stranded telomeric repeats, but it can also bind to the single G-rich telomeric strand. The chain is Telomere repeat-binding factor 2 (TRB2) from Arabidopsis thaliana (Mouse-ear cress).